The primary structure comprises 245 residues: Haloacid dehalogenase-like hydrolase domain-containing protein At2g33255 (245 aa).

Thr2 is subject to N-acetylalanine. Asp39 serves as the catalytic Nucleophile. Residues Asp39, Asp41, and Asp186 each contribute to the Mg(2+) site. Asp41 serves as the catalytic Proton donor.

Belongs to the HAD-like hydrolase superfamily. DOG/GPP family. It depends on Mg(2+) as a cofactor.

The chain is Haloacid dehalogenase-like hydrolase domain-containing protein At2g33255 from Arabidopsis thaliana (Mouse-ear cress).